Reading from the N-terminus, the 320-residue chain is Delta(7)-sterol 5(6)-desaturase erg3C (320 aa).

The next 3 membrane-spanning stretches (helical) occupy residues 43 to 63, 91 to 111, and 127 to 147; these read VISI…FFSA, SSLS…LAEV, and PWLV…IYWI. Positions 134–283 constitute a Fatty acid hydroxylase domain; it reads ILYMAFNDIG…FTWADAYFGS (150 aa). The short motif at 148 to 152 is the Histidine box-1 element; the sequence is HRLEH. The Histidine box-2 signature appears at 161 to 165; it reads HKPHH. The chain crosses the membrane as a helical span at residues 224-244; sequence YMVLFAAVQIWTILIHDGDMI. A Histidine box-3 motif is present at residues 259-263; it reads HTLHH.

The protein belongs to the sterol desaturase family. It depends on Fe cation as a cofactor.

The protein resides in the endoplasmic reticulum membrane. Delta(7)-sterol 5(6)-desaturase; part of the third module of ergosterol biosynthesis pathway that includes the late steps of the pathway. Erg3C is a minor delta(7)-sterol 5(6)-desaturase within the ergosterol pathway, erg3B being the major one. The third module or late pathway involves the ergosterol synthesis itself through consecutive reactions that mainly occur in the endoplasmic reticulum (ER) membrane. Firstly, the squalene synthase erg9 catalyzes the condensation of 2 farnesyl pyrophosphate moieties to form squalene, which is the precursor of all steroids. Squalene synthase is crucial for balancing the incorporation of farnesyl diphosphate (FPP) into sterol and nonsterol isoprene synthesis. Secondly, squalene is converted into lanosterol by the consecutive action of the squalene epoxidase erg1 and the lanosterol synthase erg7. Then, the delta(24)-sterol C-methyltransferase erg6 methylates lanosterol at C-24 to produce eburicol. Eburicol is the substrate of the sterol 14-alpha demethylase encoded by cyp51A and cyp51B, to yield 4,4,24-trimethyl ergosta-8,14,24(28)-trienol. The C-14 reductase erg24 then reduces the C14=C15 double bond which leads to 4,4-dimethylfecosterol. A sequence of further demethylations at C-4, involving the C-4 demethylation complex containing the C-4 methylsterol oxidases erg25A or erg25B, the sterol-4-alpha-carboxylate 3-dehydrogenase erg26 and the 3-keto-steroid reductase erg27, leads to the production of fecosterol via 4-methylfecosterol. The C-8 sterol isomerase erg2 then catalyzes the reaction which results in unsaturation at C-7 in the B ring of sterols and thus converts fecosterol to episterol. The sterol-C5-desaturase erg3B then catalyzes the introduction of a C-5 double bond in the B ring to produce 5-dehydroepisterol. The 2 other sterol-C5-desaturases, erg3A and erg3C, seem to be less important in ergosterol biosynthesis. The C-22 sterol desaturase erg5 further converts 5-dehydroepisterol into ergosta-5,7,22,24(28)-tetraen-3beta-ol by forming the C-22(23) double bond in the sterol side chain. Finally, ergosta-5,7,22,24(28)-tetraen-3beta-ol is substrate of the C-24(28) sterol reductases erg4A and erg4B to produce ergosterol. Possible alternative sterol biosynthetic pathways might exist from fecosterol to ergosterol, depending on the activities of the erg3 isoforms. The chain is Delta(7)-sterol 5(6)-desaturase erg3C from Aspergillus fumigatus (strain ATCC MYA-4609 / CBS 101355 / FGSC A1100 / Af293) (Neosartorya fumigata).